The chain runs to 1650 residues: Transmembrane domain-containing protein DDB_G0287209 (1650 aa).

The stretch at 194 to 225 (NNNNNNFNNNNNNNNNNNNNKNNYNNNKSNLI) forms a coiled coil. Disordered regions lie at residues 197-216 (NNNFNNNNNNNNNNNNNKNN) and 1218-1296 (ENQF…NINN). A compositionally biased stretch (low complexity) spans 1224-1284 (NNNENSGSSG…SNSNENNYNG (61 aa)). Transmembrane regions (helical) follow at residues 1314–1334 (PLLLIPFIFWILFFGLFLSLF), 1347–1369 (ILFLQLNSIVFYPLPNIYGLQLF), 1390–1410 (ISISLISIFLIYLIGISDVTS), 1454–1474 (WNIYLMLIQPLFHCLISLIVP), 1489–1509 (ILFISTPIQIVFFFSSIVILF), 1515–1535 (WWDLIFVFKTILFTSLSVTLL), 1539–1559 (PVYFSALVICQIVYSYSQFAF), 1570–1590 (VENLLNLFQLSILIVINTSII), and 1595–1615 (FNLIGILFTIVIFSCSLITII).

It is found in the membrane. The protein is Transmembrane domain-containing protein DDB_G0287209 of Dictyostelium discoideum (Social amoeba).